The following is a 387-amino-acid chain: Erythronate-4-phosphate dehydrogenase (387 aa).

Residues Ser45 and Thr67 each contribute to the substrate site. An NAD(+)-binding site is contributed by Asp147. Arg208 is a catalytic residue. Residue Asp232 participates in NAD(+) binding. Residue Glu237 is part of the active site. His254 functions as the Proton donor in the catalytic mechanism. Gly257 contacts NAD(+). Tyr258 is a binding site for substrate.

It belongs to the D-isomer specific 2-hydroxyacid dehydrogenase family. PdxB subfamily. In terms of assembly, homodimer.

The protein localises to the cytoplasm. The catalysed reaction is 4-phospho-D-erythronate + NAD(+) = (R)-3-hydroxy-2-oxo-4-phosphooxybutanoate + NADH + H(+). Its pathway is cofactor biosynthesis; pyridoxine 5'-phosphate biosynthesis; pyridoxine 5'-phosphate from D-erythrose 4-phosphate: step 2/5. Catalyzes the oxidation of erythronate-4-phosphate to 3-hydroxy-2-oxo-4-phosphonooxybutanoate. The chain is Erythronate-4-phosphate dehydrogenase from Shewanella violacea (strain JCM 10179 / CIP 106290 / LMG 19151 / DSS12).